We begin with the raw amino-acid sequence, 799 residues long: Cadherin-8 (799 aa).

The signal sequence occupies residues 1 to 29 (MPERLAETLMDLWTPLIILWITLPSCVYT). The propeptide occupies 30–61 (APMNQAHVLTTGSPLELSRQSEDMRILSRSKR). Cadherin domains follow at residues 62 to 167 (GWVW…APEF), 168 to 276 (LNGP…PPKF), 277 to 391 (AQSL…PPVF), 392 to 494 (SSPT…DNAP), and 495 to 616 (EFAS…YVLP). At 62 to 621 (GWVWNQMFVL…AYVLPIGLSM (560 aa)) the chain is on the extracellular side. N-linked (GlcNAc...) asparagine glycosylation is present at N188. Residues N463, N473, and N544 are each glycosylated (N-linked (GlcNAc...) asparagine). Residues 622–642 (GALIAILACIILLLVIVVLFV) traverse the membrane as a helical segment. Topologically, residues 643-799 (TLRRHKNEPL…YSVGESDKET (157 aa)) are cytoplasmic. The residue at position 795 (S795) is a Phosphoserine.

It is found in the cell membrane. In terms of biological role, cadherins are calcium-dependent cell adhesion proteins. They preferentially interact with themselves in a homophilic manner in connecting cells; cadherins may thus contribute to the sorting of heterogeneous cell types. In Mus musculus (Mouse), this protein is Cadherin-8 (Cdh8).